The primary structure comprises 201 residues: Orotate phosphoribosyltransferase (201 aa).

113–121 (EDIITTGKS) is a 5-phospho-alpha-D-ribose 1-diphosphate binding site. 2 residues coordinate orotate: threonine 117 and arginine 145.

It belongs to the purine/pyrimidine phosphoribosyltransferase family. PyrE subfamily. Homodimer. It depends on Mg(2+) as a cofactor.

It catalyses the reaction orotidine 5'-phosphate + diphosphate = orotate + 5-phospho-alpha-D-ribose 1-diphosphate. It functions in the pathway pyrimidine metabolism; UMP biosynthesis via de novo pathway; UMP from orotate: step 1/2. Its function is as follows. Catalyzes the transfer of a ribosyl phosphate group from 5-phosphoribose 1-diphosphate to orotate, leading to the formation of orotidine monophosphate (OMP). The sequence is that of Orotate phosphoribosyltransferase from Helicobacter pylori (strain P12).